Here is a 349-residue protein sequence, read N- to C-terminus: Cobalt-precorrin-5B C(1)-methyltransferase (349 aa).

Belongs to the CbiD family.

It carries out the reaction Co-precorrin-5B + S-adenosyl-L-methionine = Co-precorrin-6A + S-adenosyl-L-homocysteine. It participates in cofactor biosynthesis; adenosylcobalamin biosynthesis; cob(II)yrinate a,c-diamide from sirohydrochlorin (anaerobic route): step 6/10. Catalyzes the methylation of C-1 in cobalt-precorrin-5B to form cobalt-precorrin-6A. The sequence is that of Cobalt-precorrin-5B C(1)-methyltransferase from Saccharolobus solfataricus (strain ATCC 35092 / DSM 1617 / JCM 11322 / P2) (Sulfolobus solfataricus).